A 337-amino-acid chain; its full sequence is Ketol-acid reductoisomerase (NADP(+)) (337 aa).

The region spanning 1–183 is the KARI N-terminal Rossmann domain; sequence MAIETLYDSD…GGARAGVIPT (183 aa). Residues 26–29, R49, S52, S54, and 84–87 contribute to the NADP(+) site; these read YGSQ and DTSQ. Residue H109 is part of the active site. G135 lines the NADP(+) pocket. The KARI C-terminal knotted domain occupies 184–329; sequence TFKDETETDL…SQLRDLMSWV (146 aa). D192, E196, E228, and E232 together coordinate Mg(2+). S253 lines the substrate pocket.

Belongs to the ketol-acid reductoisomerase family. The cofactor is Mg(2+).

The catalysed reaction is (2R)-2,3-dihydroxy-3-methylbutanoate + NADP(+) = (2S)-2-acetolactate + NADPH + H(+). It carries out the reaction (2R,3R)-2,3-dihydroxy-3-methylpentanoate + NADP(+) = (S)-2-ethyl-2-hydroxy-3-oxobutanoate + NADPH + H(+). It functions in the pathway amino-acid biosynthesis; L-isoleucine biosynthesis; L-isoleucine from 2-oxobutanoate: step 2/4. The protein operates within amino-acid biosynthesis; L-valine biosynthesis; L-valine from pyruvate: step 2/4. In terms of biological role, involved in the biosynthesis of branched-chain amino acids (BCAA). Catalyzes an alkyl-migration followed by a ketol-acid reduction of (S)-2-acetolactate (S2AL) to yield (R)-2,3-dihydroxy-isovalerate. In the isomerase reaction, S2AL is rearranged via a Mg-dependent methyl migration to produce 3-hydroxy-3-methyl-2-ketobutyrate (HMKB). In the reductase reaction, this 2-ketoacid undergoes a metal-dependent reduction by NADPH to yield (R)-2,3-dihydroxy-isovalerate. The polypeptide is Ketol-acid reductoisomerase (NADP(+)) (Corynebacterium aurimucosum (strain ATCC 700975 / DSM 44827 / CIP 107346 / CN-1) (Corynebacterium nigricans)).